Here is a 298-residue protein sequence, read N- to C-terminus: Tyrosine recombinase XerC (298 aa).

A Core-binding (CB) domain is found at 1–84 (MNHIQEAFLN…TLRTFYEYWM (84 aa)). A Tyr recombinase domain is found at 105–286 (YLPQFFYEEE…SNQQLRKVYL (182 aa)). Catalysis depends on residues R145, K169, H238, R241, and H264. Catalysis depends on Y273, which acts as the O-(3'-phospho-DNA)-tyrosine intermediate.

Belongs to the 'phage' integrase family. XerC subfamily. As to quaternary structure, forms a cyclic heterotetrameric complex composed of two molecules of XerC and two molecules of XerD.

Its subcellular location is the cytoplasm. Functionally, site-specific tyrosine recombinase, which acts by catalyzing the cutting and rejoining of the recombining DNA molecules. The XerC-XerD complex is essential to convert dimers of the bacterial chromosome into monomers to permit their segregation at cell division. It also contributes to the segregational stability of plasmids. The sequence is that of Tyrosine recombinase XerC from Staphylococcus aureus (strain bovine RF122 / ET3-1).